The following is a 419-amino-acid chain: Phosphoglycerate kinase (419 aa).

Substrate contacts are provided by residues 42–44 (DLN), arginine 58, 81–84 (HLGR), arginine 135, and arginine 168. ATP is bound by residues lysine 219, glutamate 341, and 367–370 (GGDT).

It belongs to the phosphoglycerate kinase family. Monomer.

It is found in the cytoplasm. It catalyses the reaction (2R)-3-phosphoglycerate + ATP = (2R)-3-phospho-glyceroyl phosphate + ADP. Its pathway is carbohydrate degradation; glycolysis; pyruvate from D-glyceraldehyde 3-phosphate: step 2/5. The polypeptide is Phosphoglycerate kinase (Ralstonia nicotianae (strain ATCC BAA-1114 / GMI1000) (Ralstonia solanacearum)).